Consider the following 629-residue polypeptide: DNA mismatch repair protein MutL (629 aa).

Belongs to the DNA mismatch repair MutL/HexB family.

In terms of biological role, this protein is involved in the repair of mismatches in DNA. It is required for dam-dependent methyl-directed DNA mismatch repair. May act as a 'molecular matchmaker', a protein that promotes the formation of a stable complex between two or more DNA-binding proteins in an ATP-dependent manner without itself being part of a final effector complex. The sequence is that of DNA mismatch repair protein MutL from Rhodospirillum rubrum (strain ATCC 11170 / ATH 1.1.1 / DSM 467 / LMG 4362 / NCIMB 8255 / S1).